Reading from the N-terminus, the 946-residue chain is DDB1- and CUL4-associated factor 5 (946 aa).

WD repeat units follow at residues 51–91 (GHFG…HSRV), 99–139 (EHHS…LDVF), 140–180 (AHED…HGEP), 185–225 (NYPS…SSLL), 277–317 (FNSC…EAGG), and 331–370 (GHRS…GCTG). The interval 449–478 (GVSERSGYTDSESSASLPRSPPPTVDESAD) is disordered. The segment covering 454-465 (SGYTDSESSASL) has biased composition (polar residues). T500 is subject to Phosphothreonine. Disordered stretches follow at residues 527–656 (LSNE…MESV), 675–860 (SNNK…ELET), and 894–946 (CETP…KLKT). Phosphoserine occurs at positions 531 and 533. Residues 531 to 544 (SDSEENVCEAELDT) show a composition bias toward acidic residues. Over residues 555–567 (PEDGSSSPSSSTS) the composition is skewed to low complexity. Basic residues predominate over residues 579–592 (ATTRQRNAMRRRQK). Positions 625 to 638 (LSPSPDSSPERSAS) are enriched in low complexity. Phosphoserine occurs at positions 626, 628, and 645. The segment covering 691-701 (EGRAGTSHKDN) has biased composition (basic and acidic residues). Polar residues-rich tracts occupy residues 760-769 (GTSQDTNNSG) and 808-819 (TLNSASGNCPRT).

Interacts with DDB1, CUL4A or CUL4B. Interacts with L3MBTL3. Interacts with SOX2. Interacts with DNMT1. Interacts with E2F1.

Its pathway is protein modification; protein ubiquitination. In terms of biological role, is a substrate receptor for the CUL4-DDB1 E3 ubiquitin-protein ligase complex (CRL4), involved in the ubiquitination of a set of methylated non-histone proteins, including SOX2. The complex CRL4-DCAF5 is also involved in the ubiquitination of methylated DNMT1 and E2F1. This Mus musculus (Mouse) protein is DDB1- and CUL4-associated factor 5 (Dcaf5).